Consider the following 263-residue polypeptide: H-2 class II histocompatibility antigen, A-K beta chain (263 aa).

The signal sequence occupies residues 1 to 27; it reads MALQIPSLLLLAAVVVLTVLSSPGTEG. Residues 28–120 are beta-1; that stretch reads GNSERHFVHQ…TETPTSLRRL (93 aa). Residues 28-224 lie on the Extracellular side of the membrane; the sequence is GNSERHFVHQ…RAQSESARSK (197 aa). 2 disulfides stabilise this stretch: C42–C104 and C143–C199. Residue N46 is glycosylated (N-linked (GlcNAc...) asparagine). The beta-2 stretch occupies residues 121–214; sequence EQPSVVISLS…SLKSPITVEW (94 aa). An Ig-like C1-type domain is found at 123-211; that stretch reads PSVVISLSRT…EHPSLKSPIT (89 aa). The interval 215 to 224 is connecting peptide; the sequence is RAQSESARSK. A helical transmembrane segment spans residues 225–245; it reads MLSGIGGCVLGVIFLGLGLFI. Residues 246–263 are Cytoplasmic-facing; that stretch reads RHRSQKGPRGPPPAGLLQ.

The protein belongs to the MHC class II family. Post-translationally, ubiquitinated in immature dendritic cells leading to down-regulation of MHC class II.

It localises to the membrane. This Mus musculus (Mouse) protein is H-2 class II histocompatibility antigen, A-K beta chain (H2-Ab1).